We begin with the raw amino-acid sequence, 405 residues long: MVSTNAGGIASKQASSMAPNPGKATILALGHAFPQQLVMQDYVVDGFMRNTNCDDPELKEKLTRLCKTTTVKTRYVVMSEEILKSYPELAQEGQPTMKQRLDISNKAVTQMATEASLACVRSWGGALSEITHLVYVSSSEARFPGGDLHLARALGLSPDVRRVMLAFTGCSGGVAGLRVAKGLAESCPGARVLLATSETTIVGFRPPSPDRPYDLVGVALFGDGAGAAVVGADPTPVERPLFELHSALQRFLPDTDKTIDGRLTEEGIKFQLGRELPHIIEANVEAFCQKLMQEHPQAADKLTYGDMFWAVHPGGPAILTKMEGRLGLDGGKLRASRSALRDFGNASSNTIVYVLENMVEETRQRREEAAEEEDCEWGLILAFGPGITFEGILARNLQARARARD.

Polar residues predominate over residues 1–18 (MVSTNAGGIASKQASSMA). The segment at 1–20 (MVSTNAGGIASKQASSMAPN) is disordered. The Nucleophile role is filled by Cys-170.

Belongs to the thiolase-like superfamily. Chalcone/stilbene synthases family. As to quaternary structure, interacts with STS1. Expressed in adult flowers.

The protein localises to the endoplasmic reticulum. Its function is as follows. Plant type III polyketide synthases (PKSs) that catalyzes the condensation of fatty acyl-CoA with malonyl-CoA to generate triketide and tetraketide alpha-pyrones, the main components of pollen exine and potential sporopollenin precursors. May be involved in the synthesis of sporopollenin precursors in tapetal cells to regulate pollen wall formation. Required for exine and Ubisch body formation in anthers. Does not possess chalcone synthase (CHS) activity in vitro with the substrates 4-coumaroyl-CoA and malonyl-CoA. This is Type III polyketide synthase 10 from Oryza sativa subsp. japonica (Rice).